Consider the following 1729-residue polypeptide: 1,3-beta-glucan synthase component bgs1 (1729 aa).

A Phosphoserine modification is found at serine 23. Transmembrane regions (helical) follow at residues 378–398 (WTAC…AVVF), 416–436 (SMLL…FIFA), 448–468 (LVVG…YSIT), 503–523 (FVSW…SYFF), 546–566 (YILG…LLYL), and 577–597 (YLWY…CLGI). Residues serine 784 and serine 788 each carry the phosphoserine modification. 8 helical membrane-spanning segments follow: residues 1180–1200 (MVIM…GAMY), 1237–1257 (ILSI…CELG), 1337–1357 (MLLF…WITL), 1440–1460 (YGEI…FLFI), 1484–1504 (VAPL…GIML), 1515–1535 (YGVY…VVVF), 1550–1572 (LLGF…ICFL), and 1678–1698 (ATLY…PFVF).

It belongs to the glycosyltransferase 48 family. In terms of assembly, component of the 1,3-beta-glucan synthase (GS) complex, composed of at least the alternate catalytic subunits bgs1, bgs2, bgs3, and bgs4, and a regulatory subunit chr4.

Its subcellular location is the cell membrane. The protein localises to the cell septum. It carries out the reaction [(1-&gt;3)-beta-D-glucosyl](n) + UDP-alpha-D-glucose = [(1-&gt;3)-beta-D-glucosyl](n+1) + UDP + H(+). In terms of biological role, alternate catalytic subunit of the 1,3-beta-glucan synthase (GS) complex. Synthesizes 1,3-beta-glucan, a major structural component of the fungal cell wall. Required for the assembly of the division septum and maintenance of cell polarity. This is 1,3-beta-glucan synthase component bgs1 (bgs1) from Schizosaccharomyces pombe (strain 972 / ATCC 24843) (Fission yeast).